The primary structure comprises 199 residues: Biogenesis of lysosome-related organelles complex 1 subunit 3 (199 aa).

Over residues 1–11 (MASQSRRRRPL) the composition is skewed to basic residues. Positions 1–81 (MASQSRRRRP…AAPRDLPPLV (81 aa)) are disordered. The span at 23 to 38 (AETDSELSASSEEEEL) shows a compositional bias: acidic residues. Over residues 39-54 (YLGPSGPTRGRPTGLR) the composition is skewed to low complexity. Thr-62 carries the phosphothreonine modification. Position 64 is a phosphoserine (Ser-64).

Belongs to the BLOC1S3 family. Component of the biogenesis of lysosome-related organelles complex 1 (BLOC-1) composed of BLOC1S1, BLOC1S2, BLOC1S3, BLOC1S4, BLOC1S5, BLOC1S6, DTNBP1/BLOC1S7 and SNAPIN/BLOC1S8. Octamer composed of one copy each BLOC1S1, BLOC1S2, BLOC1S3, BLOC1S4, BLOC1S5, BLOC1S6, DTNBP1/BLOC1S7 and SNAPIN/BLOC1S8. The BLOC-1 complex associates with the AP-3 protein complex and membrane protein cargos. Interacts directly with BLOC1S2. Interacts with BLOC1S4, BLOC1S5 and BLOC1S6. In terms of processing, phosphorylated.

The protein localises to the cytoplasm. In terms of biological role, component of the BLOC-1 complex, a complex that is required for normal biogenesis of lysosome-related organelles (LRO), such as platelet dense granules and melanosomes. In concert with the AP-3 complex, the BLOC-1 complex is required to target membrane protein cargos into vesicles assembled at cell bodies for delivery into neurites and nerve terminals. The BLOC-1 complex, in association with SNARE proteins, is also proposed to be involved in neurite extension. Plays a role in intracellular vesicle trafficking. This is Biogenesis of lysosome-related organelles complex 1 subunit 3 (BLOC1S3) from Sus scrofa (Pig).